Consider the following 468-residue polypeptide: Tripartite motif-containing protein 75 (468 aa).

The segment at 16-57 adopts an RING-type zinc-finger fold; the sequence is CSICLDYLSDPVTIECGHNFCRSCIQQSWLDLQELFPCPVCR. The segment at 92–133 adopts a B box-type zinc-finger fold; the sequence is EETTLCEKHNQPLSVFCKEDLMVLCPLCTQPPDHQGHHVRPI. The Zn(2+) site is built by Cys97, His100, Cys119, and His125. The stretch at 170 to 222 forms a coiled coil; that stretch reads LELREMVENQRQELSSEFEHLNQFLDREQQAVLSRLAEEEKDNQQKLSANITA. The region spanning 276–468 is the B30.2/SPRY domain; the sequence is CSFPPQYSAL…LRICTGTVCE (193 aa).

This sequence belongs to the TRIM/RBCC family.

The protein localises to the cytoplasm. Its subcellular location is the cytoskeleton. The protein resides in the spindle. May play a role in female meiosis. In Homo sapiens (Human), this protein is Tripartite motif-containing protein 75.